Consider the following 617-residue polypeptide: Type IV inositol polyphosphate 5-phosphatase 6 (617 aa).

Disordered stretches follow at residues 30-62 (EFQA…KNTK) and 241-330 (DFDP…VLYS). Residues 242–253 (FDPSFRGSSSSH) are compositionally biased toward low complexity. Basic and acidic residues predominate over residues 254-290 (RPSDYSRRPSDYSRRPSDYSRRPSDYSRRPSDSRPSD). Low complexity predominate over residues 291–311 (YSRPSDYYSRPSDYSRPSDFS). Catalytic stretches follow at residues 458–473 (DRVI…IALS) and 538–553 (KRRT…WFGE).

Belongs to the inositol polyphosphate 5-phosphatase family. As to expression, broadly expressed in emerging organs. Mostly localized in procambium of growing organs. Restricted to vascular differentiating cells of young organs.

It catalyses the reaction a 1,2-diacyl-sn-glycero-3-phospho-(1D-myo-inositol-4,5-bisphosphate) + H2O = a 1,2-diacyl-sn-glycero-3-phospho-(1D-myo-inositol 4-phosphate) + phosphate. The enzyme catalyses a 1,2-diacyl-sn-glycero-3-phospho-(1D-myo-inositol-3,4,5-trisphosphate) + H2O = a 1,2-diacyl-sn-glycero-3-phospho-(1D-myo-inositol-3,4-bisphosphate) + phosphate. In terms of biological role, has phosphatase activity toward PtdIns(4,5)P2 and PtdIns(3,4,5)P3. Required for the patterning of procambium and during the differentiation of vascular tissues. Acts before the acquisition of preprocambial identity. Seems to be also involved in the abscisic acid (ABA) signaling pathway. Acts redundantly with CVL1 for maintaining vascular continuity. Regulates phosphoinositide-dependent VAN3 localization. The sequence is that of Type IV inositol polyphosphate 5-phosphatase 6 from Arabidopsis thaliana (Mouse-ear cress).